The sequence spans 314 residues: Malate dehydrogenase (314 aa).

Residues 11–16 (GSGNIG) and Asp-35 contribute to the NAD(+) site. Substrate is bound by residues Arg-84 and Arg-90. Residues Asn-97 and 120–122 (ITN) contribute to the NAD(+) site. The substrate site is built by Asn-122 and Arg-153. Residue His-177 is the Proton acceptor of the active site.

It belongs to the LDH/MDH superfamily. MDH type 3 family.

The enzyme catalyses (S)-malate + NAD(+) = oxaloacetate + NADH + H(+). Catalyzes the reversible oxidation of malate to oxaloacetate. The protein is Malate dehydrogenase of Rickettsia canadensis (strain McKiel).